Here is a 543-residue protein sequence, read N- to C-terminus: Protein MGF 505-10R (543 aa).

The protein belongs to the asfivirus MGF 505 family.

In terms of biological role, plays a role in virus cell tropism, and may be required for efficient virus replication in macrophages. The protein is Protein MGF 505-10R of African swine fever virus (isolate Warthog/Namibia/Wart80/1980) (ASFV).